The chain runs to 488 residues: Zinc metalloproteinase-disintegrin agkistin (488 aa).

A signal peptide spans 1–20 (MIQVLLVTICLAVFPYQGSS). A propeptide spanning residues 21–195 (IILESGNVND…NFPPDGRIEF (175 aa)) is cleaved from the precursor. Residues 198–394 (RYIELVIVAD…NPLASYCLYN (197 aa)) form the Peptidase M12B domain. Glu201 is a binding site for Ca(2+). N-linked (GlcNAc...) asparagine glycosylation occurs at Asn258. A Ca(2+)-binding site is contributed by Asp285. 3 disulfide bridges follow: Cys309-Cys391, Cys349-Cys373, and Cys351-Cys356. A Zn(2+)-binding site is contributed by His334. Glu335 is a catalytic residue. Zn(2+)-binding residues include His338 and His344. Ca(2+) is bound by residues Cys391, Asn394, Val406, Asn409, Glu413, Glu416, and Asp419. A Disintegrin domain is found at 404 to 488 (PPVCGNYYLE…AGCPRNPSHA (85 aa)). 7 disulfides stabilise this stretch: Cys407–Cys426, Cys418–Cys436, Cys420–Cys431, Cys430–Cys453, Cys444–Cys450, Cys449–Cys474, and Cys462–Cys481. A Cell attachment site motif is present at residues 466–468 (RGD).

It belongs to the venom metalloproteinase (M12B) family. P-II subfamily. P-IIb sub-subfamily. In terms of assembly, monomer. Zn(2+) serves as cofactor. In terms of tissue distribution, expressed by the venom gland.

It is found in the secreted. Its function is as follows. Inhibits ADP-induced human platelet aggregation, inhibits bovine aortic endothelial cells (BAEC) migration, has anti-angiogenic activity and induces BAEC and human micro-vascular endothelial cell (HMEC) apoptosis. The metalloproteinase domain may act in hemorrhage. This chain is Zinc metalloproteinase-disintegrin agkistin, found in Gloydius halys (Chinese water mocassin).